Reading from the N-terminus, the 343-residue chain is Ornithine carbamoyltransferase, catabolic (343 aa).

Residue 62–65 coordinates carbamoyl phosphate; that stretch reads STRT. A Ni(2+)-binding site is contributed by H79. Residues Q89, R113, and 140–143 contribute to the carbamoyl phosphate site; that span reads HPTQ. L-ornithine contacts are provided by residues N172, D236, and 240–241; that span reads SM. Carbamoyl phosphate-binding positions include 278 to 279 and R323; that span reads CL.

This sequence belongs to the aspartate/ornithine carbamoyltransferase superfamily. OTCase family. Homohexamer; dimer of trimers. Ni(2+) serves as cofactor.

Its subcellular location is the cytoplasm. It carries out the reaction carbamoyl phosphate + L-ornithine = L-citrulline + phosphate + H(+). Its pathway is amino-acid degradation; L-arginine degradation via ADI pathway; carbamoyl phosphate from L-arginine: step 2/2. Its function is as follows. Involved in the catabolism of arginine. Catalyzes the phosphorolysis of citrulline, the reverse reaction of the biosynthetic one, yielding ornithine and carbamoyl phosphate which serve to generate ATP from ADP. In Lentilactobacillus hilgardii (Lactobacillus hilgardii), this protein is Ornithine carbamoyltransferase, catabolic.